The sequence spans 190 residues: MRLRLLVSVGVLLVALLPSPPCRALLSRGPIPGARQASQHPQPLSFFQPPPQPQEPQALPTLLRVGEEYFLRLGNLDETRAAPLSPAASPLASRSSSRLSPDKVAANFFRALLQPRRPFDSPAGPAERGTENALGSRQEAPAARKRRSQEPPISLDLTFHLLREVLEMTKADQLAQQAHNNRKLLDIAGK.

A signal peptide spans 1-24 (MRLRLLVSVGVLLVALLPSPPCRA). The propeptide occupies 25-147 (LLSRGPIPGA…QEAPAARKRR (123 aa)). 2 disordered regions span residues 33-57 (GARQ…QEPQ) and 116-151 (RRPF…SQEP). A188 is subject to Alanine amide.

It belongs to the sauvagine/corticotropin-releasing factor/urotensin I family. As to quaternary structure, interacts (via C-terminus) with CRFR1 (via N-terminal extracellular domain). As to expression, produced by the hypothalamus.

Its subcellular location is the secreted. In terms of biological role, hormone regulating the release of corticotropin from pituitary gland. Induces NLRP6 in intestinal epithelial cells, hence may influence gut microbiota profile. In Bos taurus (Bovine), this protein is Corticoliberin (CRH).